The sequence spans 518 residues: Cytochrome P450 monooxygenase atnE (518 aa).

Residues 11–31 (FLAAFAVWMGVVVLAFAIFCV) traverse the membrane as a helical segment. A glycan (N-linked (GlcNAc...) asparagine) is linked at asparagine 184. Cysteine 458 contacts heme.

It belongs to the cytochrome P450 family. It depends on heme as a cofactor.

The protein localises to the membrane. The protein operates within secondary metabolite biosynthesis. Its function is as follows. Cytochrome P450 monooxygenase; part of the gene cluster that mediates the biosynthesis of aspercryptins, linear lipopeptides built from six amino acids including 2 highly unusual and nonproteogenic amino acids, 2-amino-octanoic acid (2aoa) and 2-amino-dodecanol (2adol). The core structure of aspercryptins is as follows: Ser/Ala-Thr-Ile/Val-2aoa-Asn-2adol. The first step of aspercryptin biosynthesis is the generation of the fatty acid precursors, octanoic and dodecanoic acids, by the FAS subunits atnF and atnM. The fatty acid precursors are likely transformed into the corresponding alpha-amino fatty acids in three steps. First, they are hydroxylated by the cytochrome P450 monooxygenase atnE, then oxidized to the corresponding alpha-keto acids by the NAD(P)-dependent oxidoreductase atnD, and finally converted to the alpha-amino fatty acids by the PLP-dependent aminotransferases atnH or atnJ. the alpha-amino fatty acids, 2-amino-octanoic and 2-amino-dodecanoic acids, are recognized, activated, and covalently tethered to the NRPS atnA by its fourth and sixth adenylation domains. The second module of atnA is the Thr module and contains an epimerase (E) domain responsible for the epimerization of Thr to D-allo-Thr. Additionally, despite atnA having only one epimerase domain, the first amino acid of aspercryptin A1 is D-Ser, suggesting that serine is either loaded directly as D-Ser on the first module or that the epimerase domain in the threonine module epimerizes both L-Ser and L-Thr. After condensation of the hexapeptide of aspercryptin, the C-terminal reductase (TE) domain might be involved in the reductive release and production of the aldehyde hexapeptide. Further reduction would generate aspercryptins. The variety of aspercryptins produced reflects the flexibility of the atnA NRPS, allowing incorporation of alanine instead of serine, valine for isoleucine, and a C10 fatty amino alcohol instead of the C12 version. AtnB seems to be involved in the selectivity for Ile versus Val by the third module. Moreover, type B, C and D aspercryptins have an additional N-terminal cichorine, acetyl and propionyl group respectively. The chain is Cytochrome P450 monooxygenase atnE from Emericella nidulans (strain FGSC A4 / ATCC 38163 / CBS 112.46 / NRRL 194 / M139) (Aspergillus nidulans).